A 375-amino-acid chain; its full sequence is Growth/differentiation factor 8 (375 aa).

Residues 1-18 form the signal peptide; sequence MQKLQISVYIYLFMLIVA. Positions 19-266 are excised as a propeptide; the sequence is GPVDLNENSE…VTDTPKRSRR (248 aa). N-linked (GlcNAc...) asparagine glycosylation is found at Asn-47 and Asn-71. 4 disulfides stabilise this stretch: Cys-272/Cys-282, Cys-281/Cys-340, Cys-309/Cys-372, and Cys-313/Cys-374.

The protein belongs to the TGF-beta family. Homodimer; disulfide-linked. Interacts with WFIKKN2, leading to inhibit its activity. Interacts with FSTL3. Synthesized as large precursor molecule that undergoes proteolytic cleavage to generate an N-terminal propeptide and a disulfide linked C-terminal dimer, which is the biologically active molecule. The circulating form consists of a latent complex of the C-terminal dimer and other proteins, including its propeptide, which maintain the C-terminal dimer in a latent, inactive state. Ligand activation requires additional cleavage of the prodomain by a tolloid-like metalloproteinase.

Its subcellular location is the secreted. In terms of biological role, acts specifically as a negative regulator of skeletal muscle growth. The polypeptide is Growth/differentiation factor 8 (MSTN) (Bos gaurus (Seladang)).